A 608-amino-acid polypeptide reads, in one-letter code: Altered inheritance of mitochondria protein 9, mitochondrial (608 aa).

Residues 1-21 (MLRRIVNTGTKRLFRVPPRSS) constitute a mitochondrion transit peptide.

It belongs to the AIM9 family.

The protein localises to the mitochondrion. The sequence is that of Altered inheritance of mitochondria protein 9, mitochondrial (AIM9) from Clavispora lusitaniae (strain ATCC 42720) (Yeast).